Here is a 648-residue protein sequence, read N- to C-terminus: Biosynthetic arginine decarboxylase (648 aa).

Lysine 109 bears the N6-(pyridoxal phosphate)lysine mark. 291–301 is a substrate binding site; sequence IDVGGGLGIDF.

It belongs to the Orn/Lys/Arg decarboxylase class-II family. SpeA subfamily. Mg(2+) serves as cofactor. Requires pyridoxal 5'-phosphate as cofactor.

It carries out the reaction L-arginine + H(+) = agmatine + CO2. Catalyzes the biosynthesis of agmatine from arginine. The chain is Biosynthetic arginine decarboxylase from Prochlorococcus marinus subsp. pastoris (strain CCMP1986 / NIES-2087 / MED4).